A 516-amino-acid chain; its full sequence is Endoglucanase 17 (516 aa).

The first 29 residues, 1-29, serve as a signal peptide directing secretion; it reads MALLLVSSSSSYALRVTIFLSFFFFLCNG. Asp105 (nucleophile) is an active-site residue. Active-site residues include His433, Asp484, and Glu493.

This sequence belongs to the glycosyl hydrolase 9 (cellulase E) family.

It localises to the secreted. The catalysed reaction is Endohydrolysis of (1-&gt;4)-beta-D-glucosidic linkages in cellulose, lichenin and cereal beta-D-glucans.. The protein is Endoglucanase 17 of Arabidopsis thaliana (Mouse-ear cress).